The chain runs to 491 residues: Serine hydroxymethyltransferase (491 aa).

Residues Leu-173 and 177–179 each bind (6S)-5,6,7,8-tetrahydrofolate; that span reads GHL. An N6-(pyridoxal phosphate)lysine modification is found at Lys-285.

This sequence belongs to the SHMT family. As to quaternary structure, homodimer. Requires pyridoxal 5'-phosphate as cofactor.

The protein localises to the cytoplasm. The catalysed reaction is (6R)-5,10-methylene-5,6,7,8-tetrahydrofolate + glycine + H2O = (6S)-5,6,7,8-tetrahydrofolate + L-serine. It functions in the pathway one-carbon metabolism; tetrahydrofolate interconversion. Its pathway is amino-acid biosynthesis; glycine biosynthesis; glycine from L-serine: step 1/1. Functionally, catalyzes the reversible interconversion of serine and glycine with tetrahydrofolate (THF) serving as the one-carbon carrier. This reaction serves as the major source of one-carbon groups required for the biosynthesis of purines, thymidylate, methionine, and other important biomolecules. Also exhibits THF-independent aldolase activity toward beta-hydroxyamino acids, producing glycine and aldehydes, via a retro-aldol mechanism. This chain is Serine hydroxymethyltransferase, found in Cutibacterium acnes (strain DSM 16379 / KPA171202) (Propionibacterium acnes).